The primary structure comprises 742 residues: Potassium transporter 19 (742 aa).

At 1–46 (MSVQEDGAARPEPDVLRRHDSLYGDAEKVSNNKRHGAGGSWARTLQ) the chain is on the cytoplasmic side. Residues 47-67 (LAFQSIGVVYGDVGTSPLYVY) traverse the membrane as a helical segment. Topologically, residues 68–83 (SSTFPNGIKHPDDLVG) are extracellular. Residues 84-104 (VLSLILYTLILIPMVKYVFIV) form a helical membrane-spanning segment. The Cytoplasmic segment spans residues 105-170 (LYANDNGDGG…QKLESSNAAK (66 aa)). A helical membrane pass occupies residues 171 to 191 (IALFTITILGTSMVMGDGTLT). Residues 192–206 (PAISVLSAVSGIREK) lie on the Extracellular side of the membrane. A helical transmembrane segment spans residues 207–227 (APNLTQSQVVWISVAILFVLF). At 228–236 (SMQRFGTDK) the chain is on the cytoplasmic side. Residues 237–257 (VGYTFAPVISVWFLLIAGIGM) form a helical membrane-spanning segment. Over 258–287 (YNLTVHEITILRAFNPKYIVDYFRRNGKEA) the chain is Extracellular. N-linked (GlcNAc...) asparagine glycosylation is present at asparagine 259. The helical transmembrane segment at 288-308 (WVSLGGVVLCITGTEAMFADL) threads the bilayer. The Cytoplasmic segment spans residues 309 to 317 (GHFNIRAIQ). Residues 318–338 (LSFTCVLFPSVALCYMGQAAY) traverse the membrane as a helical segment. The Extracellular segment spans residues 339–352 (LRKFPENVGDTFYR). Residues 353–373 (SIPAPLFWPVFVVAIMGAIIA) form a helical membrane-spanning segment. At 374–409 (SQAMLSGAFAILSKALSLGCFPRVEVVHTSNKYEGQ) the chain is on the cytoplasmic side. The chain crosses the membrane as a helical span at residues 410-430 (VYIPEVNFLIGAASVAVTLAF). At 431–441 (QTTANIGNAYG) the chain is on the extracellular side. A helical transmembrane segment spans residues 442-462 (ICVVTVFSITTHLMTVVMLLI). Topologically, residues 463 to 468 (WKVRLP) are cytoplasmic. A helical transmembrane segment spans residues 469-489 (FIAAFYAAFGLAEFLYLSSIL). Over 490–495 (SKFAEG) the chain is Extracellular. A helical membrane pass occupies residues 496-516 (GYLPFCFSLVLMALMATWHYV). Topologically, residues 517 to 742 (HVKRYWYELD…LLKVGITYEI (226 aa)) are cytoplasmic.

This sequence belongs to the HAK/KUP transporter (TC 2.A.72.3) family.

It localises to the membrane. In terms of biological role, high-affinity potassium transporter. This is Potassium transporter 19 (HAK19) from Oryza sativa subsp. japonica (Rice).